We begin with the raw amino-acid sequence, 488 residues long: E3 ubiquitin-protein ligase TRIM34 (488 aa).

The segment at C15 to G60 adopts an RING-type zinc-finger fold. The B box-type zinc finger occupies K92–E134. C97, H100, C119, and H125 together coordinate Zn(2+). Residues V131 to C239 adopt a coiled-coil conformation. One can recognise a B30.2/SPRY domain in the interval L283 to S488.

This sequence belongs to the TRIM/RBCC family. In terms of assembly, homotrimer. Interacts (via B-box and SPRY domain) with TRIM5. As to quaternary structure, (Microbial infection) Interacts (via the B30.2/SPRY domain) with HIV-1 capsid complexes. Is the most abundant form. It is highly expressed in the placenta, spleen, colon and peripheral blood leukocytes.

It is found in the cytoplasm. The protein localises to the mitochondrion. The catalysed reaction is S-ubiquitinyl-[E2 ubiquitin-conjugating enzyme]-L-cysteine + [acceptor protein]-L-lysine = [E2 ubiquitin-conjugating enzyme]-L-cysteine + N(6)-ubiquitinyl-[acceptor protein]-L-lysine.. The protein operates within protein modification; protein ubiquitination. Functionally, functions as antiviral protein and contributes to the defense against retroviral infections. Acts as a capsid-specific restriction factor with the help of TRIM5 and prevents infection from non-host-adapted retroviruses. During influenza A virus infection, promotes programmed cell death by targeting ZBP1 for 'Lys-63'-linked polyubiquitination. In turn, promotes ZBP1 recruitment of RIPK3 to mediate virus-induced programmed necrosis. Negatively regulates the function of mitochondria by enhancing mitochondrial depolarization leading to cytochrome c release and mitochondria-dependent apoptosis. Also promotes the formation of multinucleated giant cells by means of cell fusion and phagocytosis in epithelial cells. This Homo sapiens (Human) protein is E3 ubiquitin-protein ligase TRIM34 (TRIM34).